A 975-amino-acid chain; its full sequence is Monofunctional C1-tetrahydrofolate synthase, mitochondrial (975 aa).

The transit peptide at 1 to 30 (MSARLPFVLRRLARPQHPGSPRRLPSLCRA) directs the protein to the mitochondrion. The interval 13–45 (ARPQHPGSPRRLPSLCRASSGRGSGCGGGEGLL) is disordered. The segment at 31–345 (SSGRGSGCGG…REQQHRRWRL (315 aa)) is methylenetetrahydrofolate dehydrogenase and cyclohydrolase. Positions 34–44 (RGSGCGGGEGL) are enriched in gly residues. K187 is subject to N6-acetyllysine; alternate. K187 is subject to N6-succinyllysine; alternate. Residues 346–975 (HCLKLQPLSP…TETEQVKGLF (630 aa)) are formyltetrahydrofolate synthetase. S354 carries the post-translational modification Phosphoserine. Position 420–427 (420–427 (TPLGEGKS)) interacts with ATP. At K593 the chain carries N6-succinyllysine.

In the N-terminal section; belongs to the tetrahydrofolate dehydrogenase/cyclohydrolase family. It in the C-terminal section; belongs to the formate--tetrahydrofolate ligase family. As to quaternary structure, homodimer.

Its subcellular location is the mitochondrion. The catalysed reaction is (6S)-5,6,7,8-tetrahydrofolate + formate + ATP = (6R)-10-formyltetrahydrofolate + ADP + phosphate. Its pathway is one-carbon metabolism; tetrahydrofolate interconversion. Its function is as follows. May provide the missing metabolic reaction required to link the mitochondria and the cytoplasm in the mammalian model of one-carbon folate metabolism complementing thus the enzymatic activities of MTHFD2. The protein is Monofunctional C1-tetrahydrofolate synthase, mitochondrial (MTHFD1L) of Bos taurus (Bovine).